The following is a 208-amino-acid chain: MNRPIFIGITGGTGSGKSTVARAIFESLPEKNIAIIEQDSYYRDQSHLALEERVKTNYDHPLAFDTALLTEHLMLLAQNKTIEKPIYDFERHTRKKEFEVIEPRDIMILEGIMILDDPALRDMLDIKIFVDTDADVRIIRRIRRDMEERGRTLTSVIQQYLTTVRPAHLQFVEPNKRYANIIIPEGGDNQVAIDIMVAKIKTIIQERS.

Residue 11 to 18 (GGTGSGKS) participates in ATP binding.

This sequence belongs to the uridine kinase family.

The protein resides in the cytoplasm. The catalysed reaction is uridine + ATP = UMP + ADP + H(+). The enzyme catalyses cytidine + ATP = CMP + ADP + H(+). Its pathway is pyrimidine metabolism; CTP biosynthesis via salvage pathway; CTP from cytidine: step 1/3. It participates in pyrimidine metabolism; UMP biosynthesis via salvage pathway; UMP from uridine: step 1/1. This is Uridine kinase from Alkaliphilus metalliredigens (strain QYMF).